A 657-amino-acid polypeptide reads, in one-letter code: 9-cis-epoxycarotenoid dioxygenase NCED9, chloroplastic (657 aa).

Positions 357, 406, 471, and 642 each coordinate Fe cation.

Belongs to the carotenoid oxygenase family. Fe(2+) is required as a cofactor. In terms of tissue distribution, expressed in developing siliques, embryo and endosperm.

The protein resides in the plastid. It localises to the chloroplast stroma. It catalyses the reaction a 9-cis-epoxycarotenoid + O2 = a 12'-apo-carotenal + 2-cis,4-trans-xanthoxin. The catalysed reaction is 9-cis-violaxanthin + O2 = (3S,5R,6S)-5,6-epoxy-3-hydroxy-5,6-dihydro-12'-apo-beta-caroten-12'-al + 2-cis,4-trans-xanthoxin. It carries out the reaction 9'-cis-neoxanthin + O2 = (3S,5R,6R)-3,5-dihydroxy-6,7-didehydro-5,6-dihydro-12'-apo-beta-caroten-12'-al + 2-cis,4-trans-xanthoxin. Has a 11,12(11',12') 9-cis epoxycarotenoid cleavage activity. Catalyzes the first step of abscisic-acid biosynthesis from carotenoids. Contributes probably to abscisic acid synthesis for the induction of seed dormancy. The protein is 9-cis-epoxycarotenoid dioxygenase NCED9, chloroplastic (NCED9) of Arabidopsis thaliana (Mouse-ear cress).